We begin with the raw amino-acid sequence, 381 residues long: MPEEVHLGEKEVETFAFQAEIAQLMSLIINTFYSNKEIFLWELISNASDALDKIRYESLTDPSKLDSGKELKIDIIPNTQEHTLTLVDTGIGMTKADLINNLGTIAKFQDQTEYLEEMQVKEVVEKHSQFLGYPITLYLEKEREKEISDGKAEEEKGEKEEENKDDEEKPKIEDVGSDEEDDSGKDKKKKTKKIKEKYIDQEELNKTKPIWTRNTEDITQEEYGEFYKSLTNDWKDHLAVRYFSVEEYVSRMKEIQKSIYYITGESKEQVANSAFVEQVWKRDSRVVYMTEPIDGYQLKEFDGKSLVSVTKEGLELPEDGEEKKRMEERKAKFENLCKFMKETLDKKVEMVTVSNRLVSSSCCIVTSTYSWTANMEQIMKA.

Residues Asn46, Asp88, and Lys107 each contribute to the ATP site. The span at 145–174 shows a compositional bias: basic and acidic residues; it reads KEISDGKAEEEKGEKEEENKDDEEKPKIED. Residues 145 to 192 form a disordered region; that stretch reads KEISDGKAEEEKGEKEEENKDDEEKPKIEDVGSDEEDDSGKDKKKKTK. Position 177 is a phosphoserine (Ser177). A coiled-coil region spans residues 315-347; sequence ELPEDGEEKKRMEERKAKFENLCKFMKETLDKK.

This sequence belongs to the heat shock protein 90 family. As to quaternary structure, homodimer.

The protein localises to the cytoplasm. Its function is as follows. Putative molecular chaperone that may promote the maturation, structural maintenance and proper regulation of specific target proteins. The protein is Putative heat shock protein HSP 90-beta 2 (HSP90AB2P) of Homo sapiens (Human).